The chain runs to 1793 residues: Chitin synthase 5 (1793 aa).

Residues 1-28 are disordered; that stretch reads MTNPRMSMYSLASEAPGGNRGTGQQSTQ. N-linked (GlcNAc...) asparagine glycans are attached at residues asparagine 70, asparagine 164, asparagine 638, asparagine 664, and asparagine 669. The next 2 helical transmembrane spans lie at 750–770 and 786–806; these read VWVF…LRYV and LVLC…IVAF. Positions 815-877 constitute a Cytochrome b5 heme-binding domain; that stretch reads DKAYSQKEVD…GMNLDDYFVA (63 aa). N-linked (GlcNAc...) asparagine glycans are attached at residues asparagine 897, asparagine 1019, and asparagine 1023. A helical transmembrane segment spans residues 1056–1076; that stretch reads LLLAFSIMLCAVILLKFVSAL. Asparagine 1421 carries N-linked (GlcNAc...) asparagine glycosylation. The next 3 membrane-spanning stretches (helical) occupy residues 1452-1472, 1479-1499, and 1507-1527; these read LFGT…IYLV, FPLI…LIFI, and IGWM…LPIY. N-linked (GlcNAc...) asparagine glycans are attached at residues asparagine 1534 and asparagine 1705. The 57-residue stretch at 1735 to 1791 folds into the DEK-C domain; it reads GPDDGMIVEAIRTVLMEVDLDTVTKKQVRALVEQRLQSELVGERRTFMDRQIDHELA.

This sequence belongs to the chitin synthase family. Class V subfamily.

The protein resides in the cell membrane. It carries out the reaction [(1-&gt;4)-N-acetyl-beta-D-glucosaminyl](n) + UDP-N-acetyl-alpha-D-glucosamine = [(1-&gt;4)-N-acetyl-beta-D-glucosaminyl](n+1) + UDP + H(+). Functionally, polymerizes chitin, a structural polymer of the cell wall and septum, by transferring the sugar moiety of UDP-GlcNAc to the non-reducing end of the growing chitin polymer. Regulates Germination and Tolerance to Hyperosmotic Stress. Plays a key role in pathogenicity. Likely contributes to post-penetration virulence. This chain is Chitin synthase 5, found in Verticillium dahliae (strain VdLs.17 / ATCC MYA-4575 / FGSC 10137) (Verticillium wilt).